A 117-amino-acid chain; its full sequence is Large ribosomal subunit protein uL18 (117 aa).

This sequence belongs to the universal ribosomal protein uL18 family. As to quaternary structure, part of the 50S ribosomal subunit; part of the 5S rRNA/L5/L18/L25 subcomplex. Contacts the 5S and 23S rRNAs.

Its function is as follows. This is one of the proteins that bind and probably mediate the attachment of the 5S RNA into the large ribosomal subunit, where it forms part of the central protuberance. This chain is Large ribosomal subunit protein uL18, found in Nitrosococcus oceani (strain ATCC 19707 / BCRC 17464 / JCM 30415 / NCIMB 11848 / C-107).